A 124-amino-acid polypeptide reads, in one-letter code: UPF0482 protein YPK_1977 (124 aa).

The first 32 residues, 1–32, serve as a signal peptide directing secretion; that stretch reads MMKINNLPRLIRAFLPATLLMLPLVWQTPALA. The disordered stretch occupies residues 47–69; sequence GGNNDPMSKEQARQSQQQWDETN.

This sequence belongs to the UPF0482 family.

This is UPF0482 protein YPK_1977 from Yersinia pseudotuberculosis serotype O:3 (strain YPIII).